Here is a 452-residue protein sequence, read N- to C-terminus: Pup--protein ligase (452 aa).

Mg(2+) is bound at residue glutamate 9. Arginine 53 contributes to the ATP binding site. Tyrosine 55 serves as a coordination point for Mg(2+). Catalysis depends on aspartate 57, which acts as the Proton acceptor. Mg(2+) is bound at residue glutamate 63. Threonine 66 and tryptophan 419 together coordinate ATP.

This sequence belongs to the Pup ligase/Pup deamidase family. Pup-conjugating enzyme subfamily.

It carries out the reaction ATP + [prokaryotic ubiquitin-like protein]-L-glutamate + [protein]-L-lysine = ADP + phosphate + N(6)-([prokaryotic ubiquitin-like protein]-gamma-L-glutamyl)-[protein]-L-lysine.. It functions in the pathway protein degradation; proteasomal Pup-dependent pathway. It participates in protein modification; protein pupylation. Functionally, catalyzes the covalent attachment of the prokaryotic ubiquitin-like protein modifier Pup to the proteasomal substrate proteins, thereby targeting them for proteasomal degradation. This tagging system is termed pupylation. The ligation reaction involves the side-chain carboxylate of the C-terminal glutamate of Pup and the side-chain amino group of a substrate lysine. This is Pup--protein ligase from Frankia alni (strain DSM 45986 / CECT 9034 / ACN14a).